The chain runs to 69 residues: uncharacterized protein (69 aa).

The chain crosses the membrane as a helical span at residues 32-54 (MLGAIDVAVAVASVPTLFVVTAI).

The protein resides in the membrane. This is an uncharacterized protein from Sinorhizobium fredii (strain NBRC 101917 / NGR234).